Consider the following 130-residue polypeptide: Small ribosomal subunit protein uS8 (130 aa).

The protein belongs to the universal ribosomal protein uS8 family. As to quaternary structure, part of the 30S ribosomal subunit. Contacts proteins S5 and S12.

In terms of biological role, one of the primary rRNA binding proteins, it binds directly to 16S rRNA central domain where it helps coordinate assembly of the platform of the 30S subunit. In Shewanella sediminis (strain HAW-EB3), this protein is Small ribosomal subunit protein uS8.